Here is a 165-residue protein sequence, read N- to C-terminus: Phosphopantetheine adenylyltransferase (165 aa).

T9 is a binding site for substrate. ATP contacts are provided by residues 9-10 (TF) and H17. K41, L73, and R87 together coordinate substrate. ATP is bound by residues 88–90 (GLR), E98, and 123–129 (YMFISAT).

The protein belongs to the bacterial CoaD family. As to quaternary structure, homohexamer. The cofactor is Mg(2+).

It localises to the cytoplasm. The catalysed reaction is (R)-4'-phosphopantetheine + ATP + H(+) = 3'-dephospho-CoA + diphosphate. Its pathway is cofactor biosynthesis; coenzyme A biosynthesis; CoA from (R)-pantothenate: step 4/5. In terms of biological role, reversibly transfers an adenylyl group from ATP to 4'-phosphopantetheine, yielding dephospho-CoA (dPCoA) and pyrophosphate. The polypeptide is Phosphopantetheine adenylyltransferase (Nitrosospira multiformis (strain ATCC 25196 / NCIMB 11849 / C 71)).